The chain runs to 173 residues: Photosystem I assembly protein Ycf3 (173 aa).

TPR repeat units follow at residues 35 to 68 (AYVY…EDNP), 72 to 105 (GETL…NSNQ), and 120 to 153 (GRIA…NPGG).

Belongs to the Ycf3 family.

It localises to the cellular thylakoid membrane. Functionally, essential for the assembly of the photosystem I (PSI) complex. May act as a chaperone-like factor to guide the assembly of the PSI subunits. This is Photosystem I assembly protein Ycf3 from Parasynechococcus marenigrum (strain WH8102).